The chain runs to 271 residues: GPN-loop GTPase 3 (271 aa).

Residue 13-18 participates in GTP binding; the sequence is GAGKST. The Gly-Pro-Asn (GPN)-loop; involved in dimer interface motif lies at 70–72; the sequence is GPN. 173-176 is a binding site for GTP; sequence SKVD.

The protein belongs to the GPN-loop GTPase family. As to quaternary structure, heterodimers with GPN1 or GPN2. Binds to RNA polymerase II (RNAPII).

Its function is as follows. Small GTPase required for proper nuclear import of RNA polymerase II and III (RNAPII and RNAPIII). May act at an RNAP assembly step prior to nuclear import. The protein is GPN-loop GTPase 3 of Eremothecium gossypii (strain ATCC 10895 / CBS 109.51 / FGSC 9923 / NRRL Y-1056) (Yeast).